A 29-amino-acid polypeptide reads, in one-letter code: Snaclec multactivase regulatory subunit (29 aa).

Positions 1-29 constitute a C-type lectin domain; that stretch reads DCLPGWSVYEGRCYKVFNQKTWKAAEKFC. Cysteine 2 and cysteine 13 are joined by a disulfide.

Belongs to the snaclec family. Heterodimer of a metalloproteinase subunit and a regulatory subunit comprising two homologous polypeptides disulfide-linked. In terms of tissue distribution, expressed by the venom gland.

The protein localises to the secreted. Multactivase, a carinactivase-like calcium-dependent prothrombin activator, activates prothrombin via recognition of the calcium ion bound conformation of its gamma-carboxyglutamic acid (GLA) domain, and the subsequent conversion of prothrombin to active thrombin is catalyzed by the catalytic subunit. This is Snaclec multactivase regulatory subunit from Echis multisquamatus (Central Asian sand viper).